Consider the following 669-residue polypeptide: Leucine zipper putative tumor suppressor 2 (669 aa).

The segment covering 1–25 has biased composition (low complexity); it reads MAIVQTLPVPLEPAPEAATAPQAPV. Disordered regions lie at residues 1-56, 92-131, 150-201, and 215-323; these read MAIV…PTFF, NEDF…IPVS, PVLP…AADK, and GTLS…SDEA. Positions 1–332 are required for centrosomal localization; that stretch reads MAIVQTLPVP…ALLHCVLEGK (332 aa). Over residues 172-181 the composition is skewed to polar residues; that stretch reads LSGSQGSLTQ. The segment covering 187–199 has biased composition (low complexity); it reads ASSSSSSSSSSAA. Over residues 215-233 the composition is skewed to polar residues; the sequence is GTLSDSGRNSLSSLPTYST. Low complexity-rich tracts occupy residues 241-251 and 267-283; these read SSPGGHLPSHG and GPSH…KSTG. Ser249 is modified (phosphoserine). The span at 284-295 shows a compositional bias: gly residues; sequence SLGGRVAGGLLG. Residue Ser296 is modified to Phosphoserine. Residues 298–308 are compositionally biased toward polar residues; sequence TRASPDSSSCG. The segment covering 311–320 has biased composition (pro residues); it reads SPPPPPPPPS. A coiled-coil region spans residues 328-649; the sequence is VLEGKLRDRE…LELEARELAD (322 aa). The interval 447–669 is sufficient for interaction with CTNNB1; that stretch reads SGEISLLKQQ…CLEEITATEI (223 aa). The interval 450–669 is sufficient for interaction with KATNB1 and for inhibition of katanin-mediated microtubule severing; that stretch reads ISLLKQQLKE…CLEEITATEI (220 aa). At Ser570 the chain carries Phosphoserine. The Nuclear export signal signature appears at 631 to 640; the sequence is LEQELQQLSL.

Belongs to the LZTS2 family. In terms of assembly, interacts with KATNB1. Also interacts with CTNNB1, gamma-tubulin and KIF23. As to expression, highly expressed in prostate and testis, and at slightly lower levels in spleen, thymus, uterus, small intestine and colon.

Its subcellular location is the cytoplasm. It is found in the cytoskeleton. The protein localises to the microtubule organizing center. The protein resides in the centrosome. Its function is as follows. Negative regulator of katanin-mediated microtubule severing and release from the centrosome. Required for central spindle formation and the completion of cytokinesis. May negatively regulate axonal outgrowth by preventing the formation of microtubule bundles that are necessary for transport within the elongating axon. Negative regulator of the Wnt signaling pathway. Represses beta-catenin-mediated transcriptional activation by promoting the nuclear exclusion of beta-catenin. This is Leucine zipper putative tumor suppressor 2 from Homo sapiens (Human).